We begin with the raw amino-acid sequence, 394 residues long: Trans-enoyl reductase fumoC (394 aa).

Residue 62-65 (VDGK) coordinates NADP(+). Position 152–159 (152–159 (ASLASVGM)) interacts with substrate. Residues 224–227 (SSSS), Tyr-242, and 289–290 (LD) contribute to the NADP(+) site. 309-313 (TLTQF) lines the substrate pocket. Position 378–379 (378–379 (VK)) interacts with NADP(+).

Belongs to the zinc-containing alcohol dehydrogenase family. As to quaternary structure, monomer.

It functions in the pathway secondary metabolite biosynthesis. Its function is as follows. Trans-enoyl reductase; part of the gene cluster that mediates the biosynthesis of fumosorinone, a 2-pyridone alkaloid that acts as an inhibitor of protein tyrosine phosphatase 1B which is implicated asa negative regulator of insulin receptor signaling and a potential drug target for the treatment of type II diabetes and other associated metabolic syndromes. The polyketide-amino acid backbone of fumosorinone is first assembled by the PKS-NRPS hybrid fumoS. The PKS modules condense one acetyl-CoA starter unit with 7 malonyl-CoA units, programmed C-methylations occurring after the first 3 and the sixth extensions, and cycles of full reduction occurring after the first 2 extensions. Because fumoS lacks a designated enoyl reductase (ER) domain, the required activity is provided the enoyl reductase fumoC. Upon formation of the polyketide backbone on the thiotemplate, the polyketide is transferred to the NRPS module and linked to tyrosine to produce the acyltetramic acid intermediate called prefumosorinone A. The cytochrome P450 monooxygenase fumoA then probably catalyzes an unprecedented oxidative ring expansion of prefumosorinone A to form prefumosorinone B which contains the 2-pyridone core of fumosorinone. The cytochrome P450 monooxygenase fumoB might hydroxylate the nitrogen of prefumosorinone B, but not the acyltetramic acid prefumosorinone A, to form fumosorinone. In Cordyceps fumosorosea (strain ARSEF 2679) (Isaria fumosorosea), this protein is Trans-enoyl reductase fumoC.